We begin with the raw amino-acid sequence, 321 residues long: Cilia- and flagella-associated protein 161 (321 aa).

A disordered region spans residues L275–M321. A compositionally biased stretch (basic and acidic residues) spans P285–V299.

In terms of assembly, microtubule inner protein component of sperm flagellar doublet microtubules. In terms of tissue distribution, expressed in trachea multiciliated cells.

Its subcellular location is the cytoplasm. The protein resides in the cytoskeleton. The protein localises to the cilium axoneme. It localises to the flagellum axoneme. Its function is as follows. Microtubule inner protein (MIP) part of the dynein-decorated doublet microtubules (DMTs) in cilia axoneme, which is required for motile cilia beating. The polypeptide is Cilia- and flagella-associated protein 161 (Bos taurus (Bovine)).